The primary structure comprises 350 residues: Phenylalanine--tRNA ligase alpha subunit (350 aa).

Mg(2+) is bound at residue Glu259.

It belongs to the class-II aminoacyl-tRNA synthetase family. Phe-tRNA synthetase alpha subunit type 1 subfamily. As to quaternary structure, tetramer of two alpha and two beta subunits. It depends on Mg(2+) as a cofactor.

The protein localises to the cytoplasm. The catalysed reaction is tRNA(Phe) + L-phenylalanine + ATP = L-phenylalanyl-tRNA(Phe) + AMP + diphosphate + H(+). The protein is Phenylalanine--tRNA ligase alpha subunit (pheS) of Rickettsia prowazekii (strain Madrid E).